The chain runs to 217 residues: NADPH-dependent 3-demethoxyubiquinone 3-hydroxylase, mitochondrial (217 aa).

A mitochondrion-targeting transit peptide spans 1-23 (MSAAGAIAAASVGRLRTGVRRPF). 2 consecutive repeat copies span residues 48–129 (AVDR…TALL) and 130–217 (GKEG…SERF). The 2 X approximate tandem repeats stretch occupies residues 48–217 (AVDRIIRVDH…SAAIYLSERF (170 aa)). Arginine 51 is a binding site for NADH. Residues glutamate 60, glutamate 90, histidine 93, glutamate 142, glutamate 178, and histidine 181 each coordinate Fe cation. Residues tyrosine 212 and arginine 216 each coordinate NADH.

Belongs to the COQ7 family. Component of a multi-subunit COQ enzyme complex. Interacts with COQ8B and COQ6. Interacts with COQ9. Requires Fe cation as cofactor. In terms of tissue distribution, highly expressed in tissues with high energy demand such as heart, muscle, liver, and kidney.

It localises to the mitochondrion inner membrane. The enzyme catalyses a 5-methoxy-2-methyl-3-(all-trans-polyprenyl)benzoquinone + NADH + O2 = a 3-demethylubiquinone + NAD(+) + H2O. Its pathway is cofactor biosynthesis; ubiquinone biosynthesis. Functionally, catalyzes the hydroxylation of the 5-methoxy-2-methyl-3-(all-trans-polyprenyl)benzoquinone at the C6 position and participates in the biosynthesis of ubiquinone. Catalyzes the reaction through a substrate-mediated reduction pathway, whereby NADH shuttles electrons to 5-methoxy-2-methyl-3-(all-trans-decaprenyl)benzoquinone, which then transfers the electrons to the two Fe(3+) centers. The binding of 5-methoxy-2-methyl-3-(all-trans-polyprenyl)benzoquinone (DMQn) mediates reduction of the diiron center by nicotinamide adenine dinucleotide (NADH) and initiates oxygen activation for subsequent DMQ hydroxylation. The physiological substrates are 5-methoxy-2-methyl-3-(all-trans-nonaprenyl)benzoquinone (DMQ(9)) and 5-methoxy-2-methyl-3-(all-trans-decaprenyl)benzoquinone (DMQ(10)), however in vitro the enzyme does not have any specificity concerning the length of the polyprenyl tail, and accepts tails of various lengths with similar efficiency. Also has a structural role in the COQ enzyme complex, stabilizing other COQ polypeptides. Involved in lifespan determination in a ubiquinone-independent manner. Plays a role in modulating mitochondrial stress responses, acting in the nucleus, perhaps via regulating gene expression, independent of its characterized mitochondrial function in ubiquinone biosynthesis. The chain is NADPH-dependent 3-demethoxyubiquinone 3-hydroxylase, mitochondrial from Mus musculus (Mouse).